A 155-amino-acid chain; its full sequence is NADPH-dependent 7-cyano-7-deazaguanine reductase (155 aa).

Residue cysteine 52 is the Thioimide intermediate of the active site. Aspartate 59 acts as the Proton donor in catalysis. Residues 74–76 (VES) and 93–94 (HE) each bind substrate.

It belongs to the GTP cyclohydrolase I family. QueF type 1 subfamily.

The protein resides in the cytoplasm. The catalysed reaction is 7-aminomethyl-7-carbaguanine + 2 NADP(+) = 7-cyano-7-deazaguanine + 2 NADPH + 3 H(+). It participates in tRNA modification; tRNA-queuosine biosynthesis. Catalyzes the NADPH-dependent reduction of 7-cyano-7-deazaguanine (preQ0) to 7-aminomethyl-7-deazaguanine (preQ1). This is NADPH-dependent 7-cyano-7-deazaguanine reductase from Syntrophobacter fumaroxidans (strain DSM 10017 / MPOB).